The chain runs to 457 residues: Acetylcholine receptor subunit alpha (457 aa).

The N-terminal stretch at 1–20 is a signal peptide; the sequence is MELSTVLLLLGLCSAGLVLG. Topologically, residues 21–230 are extracellular; sequence SEHETRLVAK…ITYHFVMQRL (210 aa). 2 cysteine pairs are disulfide-bonded: C148–C162 and C212–C213. A glycan (N-linked (GlcNAc...) asparagine) is linked at N161. Transmembrane regions (helical) follow at residues 231-255, 263-281, and 297-316; these read PLYFIVNVIIPCLLFSFLTSLVFYL, MTLSISVLLSLTVFLLVIV, and YMLFTMVFVIASIIITVIVI. Over 317–428 the chain is Cytoplasmic; it reads NTHHRSPSTH…WKYVAMVMDH (112 aa). A helical transmembrane segment spans residues 429–447; sequence ILLGVFMLVCLIGTLAVFA.

The protein belongs to the ligand-gated ion channel (TC 1.A.9) family. Acetylcholine receptor (TC 1.A.9.1) subfamily. Alpha-1/CHRNA1 sub-subfamily. As to quaternary structure, one of the alpha chains that assemble within the acetylcholine receptor, a pentamer of two alpha chains, a beta, a delta, and a gamma (in immature muscle) or epsilon (in mature muscle) chains. The muscle heteropentamer composed of alpha-1, beta-1, delta, epsilon subunits interacts with the alpha-conotoxin ImII.

Its subcellular location is the postsynaptic cell membrane. The protein localises to the cell membrane. It carries out the reaction K(+)(in) = K(+)(out). It catalyses the reaction Na(+)(in) = Na(+)(out). Its function is as follows. Upon acetylcholine binding, the AChR responds by an extensive change in conformation that affects all subunits and leads to opening of an ion-conducting channel across the plasma membrane. This is Acetylcholine receptor subunit alpha (Chrna1) from Mus musculus (Mouse).